The following is a 197-amino-acid chain: Protein GrpE (197 aa).

The interval 1-43 is disordered; that stretch reads MSSKEQKTPDGQAPEEIVTEQHEEVESVESAESAEQVDPRDEE.

This sequence belongs to the GrpE family. Homodimer.

Its subcellular location is the cytoplasm. In terms of biological role, participates actively in the response to hyperosmotic and heat shock by preventing the aggregation of stress-denatured proteins, in association with DnaK and GrpE. It is the nucleotide exchange factor for DnaK and may function as a thermosensor. Unfolded proteins bind initially to DnaJ; upon interaction with the DnaJ-bound protein, DnaK hydrolyzes its bound ATP, resulting in the formation of a stable complex. GrpE releases ADP from DnaK; ATP binding to DnaK triggers the release of the substrate protein, thus completing the reaction cycle. Several rounds of ATP-dependent interactions between DnaJ, DnaK and GrpE are required for fully efficient folding. This is Protein GrpE from Cronobacter sakazakii (strain ATCC BAA-894) (Enterobacter sakazakii).